A 136-amino-acid polypeptide reads, in one-letter code: Large ribosomal subunit protein uL16c (136 aa).

It belongs to the universal ribosomal protein uL16 family. As to quaternary structure, part of the 50S ribosomal subunit.

It localises to the plastid. The protein resides in the chloroplast. The chain is Large ribosomal subunit protein uL16c from Oryza sativa (Rice).